A 159-amino-acid chain; its full sequence is NADH-quinone oxidoreductase subunit B 2 (159 aa).

[4Fe-4S] cluster is bound by residues C37, C38, C102, and C132.

It belongs to the complex I 20 kDa subunit family. As to quaternary structure, NDH-1 is composed of 14 different subunits. Subunits NuoB, C, D, E, F, and G constitute the peripheral sector of the complex. The cofactor is [4Fe-4S] cluster.

The protein localises to the cell inner membrane. It catalyses the reaction a quinone + NADH + 5 H(+)(in) = a quinol + NAD(+) + 4 H(+)(out). Its function is as follows. NDH-1 shuttles electrons from NADH, via FMN and iron-sulfur (Fe-S) centers, to quinones in the respiratory chain. Couples the redox reaction to proton translocation (for every two electrons transferred, four hydrogen ions are translocated across the cytoplasmic membrane), and thus conserves the redox energy in a proton gradient. This Azoarcus sp. (strain BH72) protein is NADH-quinone oxidoreductase subunit B 2.